The following is a 136-amino-acid chain: Protein NrdI (136 aa).

This sequence belongs to the NrdI family.

Functionally, probably involved in ribonucleotide reductase function. This chain is Protein NrdI, found in Citrobacter koseri (strain ATCC BAA-895 / CDC 4225-83 / SGSC4696).